Reading from the N-terminus, the 326-residue chain is Tetraacyldisaccharide 4'-kinase (326 aa).

An ATP-binding site is contributed by Ser53 to Thr60.

This sequence belongs to the LpxK family.

The catalysed reaction is a lipid A disaccharide + ATP = a lipid IVA + ADP + H(+). It functions in the pathway glycolipid biosynthesis; lipid IV(A) biosynthesis; lipid IV(A) from (3R)-3-hydroxytetradecanoyl-[acyl-carrier-protein] and UDP-N-acetyl-alpha-D-glucosamine: step 6/6. Transfers the gamma-phosphate of ATP to the 4'-position of a tetraacyldisaccharide 1-phosphate intermediate (termed DS-1-P) to form tetraacyldisaccharide 1,4'-bis-phosphate (lipid IVA). This is Tetraacyldisaccharide 4'-kinase from Actinobacillus pleuropneumoniae serotype 7 (strain AP76).